Reading from the N-terminus, the 309-residue chain is Elongation factor Ts (309 aa).

The segment at 82-85 (TDFV) is involved in Mg(2+) ion dislocation from EF-Tu.

This sequence belongs to the EF-Ts family.

Its subcellular location is the cytoplasm. Associates with the EF-Tu.GDP complex and induces the exchange of GDP to GTP. It remains bound to the aminoacyl-tRNA.EF-Tu.GTP complex up to the GTP hydrolysis stage on the ribosome. The sequence is that of Elongation factor Ts (tsf) from Rickettsia prowazekii (strain Madrid E).